We begin with the raw amino-acid sequence, 946 residues long: MKPLSSPLQQYWQTVVERLPELLAEESLSAQAKSVLTFSDFVQDSVIAHPEWLTELESQPPQADEWQHYSVWLQEALSNVSDEAGLMRELRLFRRRIMVRIAWAQTLALVTEESILQQLSYLAETLIVAARDWLYDACCREWGTPCNAQGEAQPLLILGMGKLGGGELNFSSDIDLIFAWPEHGCTQGGRRELDNAQFFTRMGQRLIKVLDQPTQDGFVYRVDMRLRPFGESGPLVLSFAALEDYYQEQGRDWERYAMVKARIMGDSEGVYANELRAMLRPFVFRRYIDFSVIQSLRNMKGMIAREVRRRGLTDNIKLGAGGIREIEFIVQVFQLIRGGREPLLQSRSLLPTLSAIAALHLLSENDAEQLRVAYLFLRRLENLLQSINDEQTQTLPSDELNRARLAWAMDFADWPQLTGALTAHMTNVRRVFNELIGDDESETQEESLSEQWRELWQDALQEDDTTPVLAHLSEDDRKQVLTMIADFRKELDKRTIGPRGRQVLDHLMPHLLSDVCAREDAAVTLSRITALLVGIVTRTTYLELLSEFPAALKHLISLCAASPMIASQLARYPLLLDELLDPNTLYQPTATDAYRDELRQYLLRVPEDDEEQQLEALRQFKQAQLLRIAAADIAGTLPVMKVSDHLTWLAEAMIDAVVQQAWGQMVARYGKPNHLNEREGRGFAVVGYGKLGGWELGYSSDLDLIFLHDCPMDAMTDGEREIDGRQFYLRLAQRIMHLFSTRTSSGILYEVDARLRPSGAAGMLVTSAEAFADYQKNEAWTWEHQALVRARVVYGDPQLTAHFDAVRREIMTLPREGKTLQTEVREMREKMRAHLGNKHRNRFDIKADEGGITDIEFITQYLVLRYAHEKPKLTRWSDNVRILELLAQNDIMEEQEAMALTRAYTTLRDELHHLALQELPGHVSEDCFTAERDLVRASWQKWLVEE.

The adenylyl removase stretch occupies residues 1–440 (MKPLSSPLQQ…VFNELIGDDE (440 aa)). The tract at residues 449-946 (SEQWRELWQD…ASWQKWLVEE (498 aa)) is adenylyl transferase.

Belongs to the GlnE family. Mg(2+) serves as cofactor.

The enzyme catalyses [glutamine synthetase]-O(4)-(5'-adenylyl)-L-tyrosine + phosphate = [glutamine synthetase]-L-tyrosine + ADP. The catalysed reaction is [glutamine synthetase]-L-tyrosine + ATP = [glutamine synthetase]-O(4)-(5'-adenylyl)-L-tyrosine + diphosphate. Functionally, involved in the regulation of glutamine synthetase GlnA, a key enzyme in the process to assimilate ammonia. When cellular nitrogen levels are high, the C-terminal adenylyl transferase (AT) inactivates GlnA by covalent transfer of an adenylyl group from ATP to specific tyrosine residue of GlnA, thus reducing its activity. Conversely, when nitrogen levels are low, the N-terminal adenylyl removase (AR) activates GlnA by removing the adenylyl group by phosphorolysis, increasing its activity. The regulatory region of GlnE binds the signal transduction protein PII (GlnB) which indicates the nitrogen status of the cell. The sequence is that of Bifunctional glutamine synthetase adenylyltransferase/adenylyl-removing enzyme from Shigella flexneri.